Consider the following 523-residue polypeptide: UDP-glucuronosyltransferase 3A2 (523 aa).

Residues 1–22 (MAGQRVLLLVGFLLPGVLLSEA) form the signal peptide. Topologically, residues 23-483 (AKILTISTVG…YVFQQPWHEQ (461 aa)) are extracellular. N-linked (GlcNAc...) asparagine glycosylation occurs at N52. The chain crosses the membrane as a helical span at residues 484 to 504 (YLLDVFVFLLGLTLGTLWLCG). The Cytoplasmic segment spans residues 505 to 523 (KLLGMAVWWLRGARKVKET).

It belongs to the UDP-glycosyltransferase family.

It localises to the membrane. It carries out the reaction glucuronate acceptor + UDP-alpha-D-glucuronate = acceptor beta-D-glucuronoside + UDP + H(+). UDP-glucuronosyltransferases catalyze phase II biotransformation reactions in which lipophilic substrates are conjugated with glucuronic acid to increase water solubility and enhance excretion. They are of major importance in the conjugation and subsequent elimination of potentially toxic xenobiotics and endogenous compounds. The sequence is that of UDP-glucuronosyltransferase 3A2 (UGT3A2) from Homo sapiens (Human).